The chain runs to 211 residues: Large ribosomal subunit protein uL4 (211 aa).

Residues 44–90 are disordered; it reads ERQGTHSTLTKGEVRGGGKKPWRQKHTGKARTGSTRNPHWTGGGVVF. The segment covering 60–72 has biased composition (basic residues); the sequence is GGKKPWRQKHTGK.

Belongs to the universal ribosomal protein uL4 family. As to quaternary structure, part of the 50S ribosomal subunit.

One of the primary rRNA binding proteins, this protein initially binds near the 5'-end of the 23S rRNA. It is important during the early stages of 50S assembly. It makes multiple contacts with different domains of the 23S rRNA in the assembled 50S subunit and ribosome. Its function is as follows. Forms part of the polypeptide exit tunnel. The sequence is that of Large ribosomal subunit protein uL4 from Ureaplasma urealyticum serovar 10 (strain ATCC 33699 / Western).